A 234-amino-acid chain; its full sequence is Proteasome subunit alpha type-2 (234 aa).

A2 bears the N-acetylalanine mark. Y6 carries the post-translational modification Phosphotyrosine. 3 positions are modified to phosphoserine: S7, S14, and S16. At Y24 the chain carries Phosphotyrosine. K70 carries the N6-acetyllysine modification. Y76 and Y121 each carry phosphotyrosine. At K171 the chain carries N6-acetyllysine.

This sequence belongs to the peptidase T1A family. As to quaternary structure, the 26S proteasome consists of a 20S proteasome core and two 19S regulatory subunits. The 20S proteasome core is a barrel-shaped complex made of 28 subunits that are arranged in four stacked rings. The two outer rings are each formed by seven alpha subunits, and the two inner rings are formed by seven beta subunits. The proteolytic activity is exerted by three beta-subunits PSMB5, PSMB6 and PSMB7. Phosphorylated on tyrosine residues; which may be important for nuclear import.

Its subcellular location is the cytoplasm. It localises to the nucleus. Functionally, component of the 20S core proteasome complex involved in the proteolytic degradation of most intracellular proteins. This complex plays numerous essential roles within the cell by associating with different regulatory particles. Associated with two 19S regulatory particles, forms the 26S proteasome and thus participates in the ATP-dependent degradation of ubiquitinated proteins. The 26S proteasome plays a key role in the maintenance of protein homeostasis by removing misfolded or damaged proteins that could impair cellular functions, and by removing proteins whose functions are no longer required. Associated with the PA200 or PA28, the 20S proteasome mediates ubiquitin-independent protein degradation. This type of proteolysis is required in several pathways including spermatogenesis (20S-PA200 complex) or generation of a subset of MHC class I-presented antigenic peptides (20S-PA28 complex). The chain is Proteasome subunit alpha type-2 (PSMA2) from Bos taurus (Bovine).